Here is a 114-residue protein sequence, read N- to C-terminus: T cell receptor alpha variable 24 (114 aa).

The N-terminal stretch at 1-22 is a signal peptide; sequence MEKNPLAAPLLILWFHLDCVSS. The Ig-like domain maps to 23–114; that stretch reads ILNVEQSPQS…EDSATYLCAF (92 aa). Asn42 carries an N-linked (GlcNAc...) asparagine glycan. A disulfide bridge connects residues Cys45 and Cys112.

As to quaternary structure, alpha-beta TR is a heterodimer composed of an alpha and beta chain; disulfide-linked. The alpha-beta TR is associated with the transmembrane signaling CD3 coreceptor proteins to form the TR-CD3 (TcR or TCR). The assembly of alpha-beta TR heterodimers with CD3 occurs in the endoplasmic reticulum where a single alpha-beta TR heterodimer associates with one CD3D-CD3E heterodimer, one CD3G-CD3E heterodimer and one CD247 homodimer forming a stable octameric structure. CD3D-CD3E and CD3G-CD3E heterodimers preferentially associate with TR alpha and TR beta chains, respectively. The association of the CD247 homodimer is the last step of TcR assembly in the endoplasmic reticulum and is required for transport to the cell surface.

The protein localises to the cell membrane. V region of the variable domain of T cell receptor (TR) alpha chain that participates in the antigen recognition. Alpha-beta T cell receptors are antigen specific receptors which are essential to the immune response and are present on the cell surface of T lymphocytes. Recognize peptide-major histocompatibility (MH) (pMH) complexes that are displayed by antigen presenting cells (APC), a prerequisite for efficient T cell adaptive immunity against pathogens. Binding of alpha-beta TR to pMH complex initiates TR-CD3 clustering on the cell surface and intracellular activation of LCK that phosphorylates the ITAM motifs of CD3G, CD3D, CD3E and CD247 enabling the recruitment of ZAP70. In turn ZAP70 phosphorylates LAT, which recruits numerous signaling molecules to form the LAT signalosome. The LAT signalosome propagates signal branching to three major signaling pathways, the calcium, the mitogen-activated protein kinase (MAPK) kinase and the nuclear factor NF-kappa-B (NF-kB) pathways, leading to the mobilization of transcription factors that are critical for gene expression and essential for T cell growth and differentiation. The T cell repertoire is generated in the thymus, by V-(D)-J rearrangement. This repertoire is then shaped by intrathymic selection events to generate a peripheral T cell pool of self-MH restricted, non-autoaggressive T cells. Post-thymic interaction of alpha-beta TR with the pMH complexes shapes TR structural and functional avidity. This Homo sapiens (Human) protein is T cell receptor alpha variable 24.